Here is a 225-residue protein sequence, read N- to C-terminus: UPF0128 protein PH1314 (225 aa).

The protein belongs to the UPF0128 family.

This chain is UPF0128 protein PH1314, found in Pyrococcus horikoshii (strain ATCC 700860 / DSM 12428 / JCM 9974 / NBRC 100139 / OT-3).